The following is a 648-amino-acid chain: Cysteine-rich receptor-like protein kinase 38 (648 aa).

An N-terminal signal peptide occupies residues 1–25; that stretch reads MKNSAAIFLTSSLILLLQTLHGVKA. 2 Gnk2-homologous domains span residues 26–127 and 140–247; these read GFIC…DQST and PSPV…FYPF. Over 26–278 the chain is Extracellular; it reads GFICVGSSFP…EAISITRLKG (253 aa). Residues N37, N63, N151, N174, and N253 are each glycosylated (N-linked (GlcNAc...) asparagine). The helical transmembrane segment at 279–299 threads the bilayer; that stretch reads GIIAIFVVPIVINLLVFIGLI. The Cytoplasmic portion of the chain corresponds to 300–648; the sequence is RAYTRIRKSY…ELSITELSPR (349 aa). Residues 339–611 form the Protein kinase domain; it reads FSFENKIGQG…VIQWLGSETI (273 aa). Residues 345–353 and K367 each bind ATP; that span reads IGQGGFGSV. Phosphotyrosine is present on Y412. D464 acts as the Proton acceptor in catalysis. Phosphoserine is present on S468. Phosphothreonine is present on T504. The residue at position 512 (Y512) is a Phosphotyrosine.

The protein belongs to the protein kinase superfamily. Ser/Thr protein kinase family. CRK subfamily.

It localises to the membrane. It catalyses the reaction L-seryl-[protein] + ATP = O-phospho-L-seryl-[protein] + ADP + H(+). The enzyme catalyses L-threonyl-[protein] + ATP = O-phospho-L-threonyl-[protein] + ADP + H(+). This chain is Cysteine-rich receptor-like protein kinase 38 (CRK38), found in Arabidopsis thaliana (Mouse-ear cress).